A 97-amino-acid chain; its full sequence is Mapk-regulated corepressor-interacting protein 1 (97 aa).

Positions 1 to 30 are disordered; it reads MTSSPVSRVVYNGKRTSSPRSPPSSSEIFT. Ser-21 and Ser-24 each carry phosphoserine. Thr-30 carries the phosphothreonine modification. Tyr-41 carries the phosphotyrosine modification. At Lys-79 the chain carries N6-acetyllysine. A PXDLS motif motif is present at residues 80-84; the sequence is PIDLS.

Belongs to the MCRIP family. In terms of assembly, interacts (unphosphorylated form, via the PXDLS motif) with CTBP1, competitively inhibiting CTBP-ZEB1 interaction. Interacts with CTBP2. Interacts with MCRIP2. Interacts with DDX6. In terms of processing, phosphorylation by MAPK3/1 (ERK1/2) regulates MCRIP1 binding to CTBP(s).

The protein localises to the nucleus. It localises to the cytoplasm. It is found in the stress granule. In terms of biological role, the phosphorylation status of MCRIP1 functions as a molecular switch to regulate epithelial-mesenchymal transition. Unphosphorylated MCRIP1 binds to and inhibits the transcriptional corepressor CTBP(s). When phosphorylated by MAPK/ERK, MCRIP1 releases CTBP(s) resulting in transcriptional silencing of the E-cadherin gene and induction of epithelial-mesenchymal transition. This is Mapk-regulated corepressor-interacting protein 1 from Homo sapiens (Human).